We begin with the raw amino-acid sequence, 418 residues long: D-amino acid dehydrogenase (418 aa).

Position 3–17 (3–17 (VLVLGAGVAGVSSAW)) interacts with FAD.

This sequence belongs to the DadA oxidoreductase family. It depends on FAD as a cofactor.

The enzyme catalyses a D-alpha-amino acid + A + H2O = a 2-oxocarboxylate + AH2 + NH4(+). Its pathway is amino-acid degradation; D-alanine degradation; NH(3) and pyruvate from D-alanine: step 1/1. Functionally, oxidative deamination of D-amino acids. The chain is D-amino acid dehydrogenase from Neisseria meningitidis serogroup C (strain 053442).